The following is a 281-amino-acid chain: Sulfur carrier protein FdhD (281 aa).

The active-site Cysteine persulfide intermediate is the Cys117.

It belongs to the FdhD family.

It is found in the cytoplasm. Required for formate dehydrogenase (FDH) activity. Acts as a sulfur carrier protein that transfers sulfur from IscS to the molybdenum cofactor prior to its insertion into FDH. In Xanthomonas oryzae pv. oryzae (strain MAFF 311018), this protein is Sulfur carrier protein FdhD.